The primary structure comprises 735 residues: Serine/threonine-protein kinase BRSK2 (735 aa).

The Protein kinase domain occupies 20 to 271 (YRLEKTLGKG…LEHIQKHIWY (252 aa)). ATP-binding positions include 26–34 (LGKGQTGLV) and lysine 49. The active-site Proton acceptor is the aspartate 142. The residue at position 175 (threonine 175) is a Phosphothreonine; by LKB1. Threonine 261 bears the Phosphothreonine; by PKA mark. Position 295 is a phosphoserine (serine 295). The UBA domain occupies 298 to 340 (DIDPDVLDSMHSLGCFRDRNKLLQDLLSEEENQEKMIYFLLLD). Positions 346–367 (PSHEDEDLPPRNEIDPPRKRVD) are enriched in basic and acidic residues. 2 disordered regions span residues 346–476 (PSHE…GVPW) and 492–516 (RFHRRKLQVPTPEEMSNLTPESSPE). Phosphoserine is present on residues serine 368, serine 383, serine 394, serine 413, serine 424, and serine 428. The span at 411–429 (SRSISGASSGLSTSPLSSP) shows a compositional bias: low complexity. Residues 432–446 (TPHPSPRGSPLPTPK) are compositionally biased toward pro residues. A Phosphoserine modification is found at serine 456. Phosphothreonine occurs at positions 460, 464, and 510. Residues serine 513, serine 514, and serine 521 each carry the phosphoserine modification. Residues 604–606 (KEN) carry the KEN box motif. A disordered region spans residues 682–735 (KNGQAAQAPSTPAKRSAHGPLGDSAAAGPGGDTEYPMGKDMAKMGPPAARREQP).

It belongs to the protein kinase superfamily. CAMK Ser/Thr protein kinase family. SNF1 subfamily. In terms of assembly, interacts with FZR1, a regulatory subunit of the APC ubiquitin ligase complex. Interacts with COPS5. Interacts with PAK1. Requires Mg(2+) as cofactor. May be phosphorylated at Thr-261 by PKA. Phosphorylated at Thr-175 by STK11/LKB1 in complex with STE20-related adapter-alpha (STRADA) pseudo kinase and CAB39. Not phosphorylated at Thr-175 by CaMKK2. In contrast, it is phosphorylated and activated by CaMKK1. May be inactivated via dephosphorylation of Thr-175 by PP2C. In terms of processing, polyubiquitinated by the APC complex in conjunction with FZR1, leading to its proteasomal degradation. Targeted for proteasomal degradation by interaction with COPS5. BRSK2 levels change during the cell cycle. BRSK2 levels are low at the G1/S boundary and gradually increase as cells progress into G2 phase. BRSK2 levels decrease rapidly at the end of mitosis. Detected in pancreas islets and in brain (at protein level). Detected in brain and pancreas.

The protein localises to the cytoplasm. It localises to the cytoskeleton. Its subcellular location is the microtubule organizing center. The protein resides in the centrosome. It is found in the perinuclear region. The protein localises to the endoplasmic reticulum. It carries out the reaction L-seryl-[protein] + ATP = O-phospho-L-seryl-[protein] + ADP + H(+). The catalysed reaction is L-threonyl-[protein] + ATP = O-phospho-L-threonyl-[protein] + ADP + H(+). It catalyses the reaction L-seryl-[tau protein] + ATP = O-phospho-L-seryl-[tau protein] + ADP + H(+). The enzyme catalyses L-threonyl-[tau protein] + ATP = O-phospho-L-threonyl-[tau protein] + ADP + H(+). Its activity is regulated as follows. Activated by phosphorylation on Thr-175 by STK11/LKB1. Serine/threonine-protein kinase that plays a key role in polarization of neurons and axonogenesis, cell cycle progress and insulin secretion. Phosphorylates CDK16, CDC25C, MAPT/TAU, PAK1 and WEE1. Following phosphorylation and activation by STK11/LKB1, acts as a key regulator of polarization of cortical neurons, probably by mediating phosphorylation of microtubule-associated proteins such as MAPT/TAU at 'Thr-504' and 'Ser-554'. Also regulates neuron polarization by mediating phosphorylation of WEE1 at 'Ser-642' in post-mitotic neurons, leading to down-regulate WEE1 activity in polarized neurons. Plays a role in the regulation of the mitotic cell cycle progress and the onset of mitosis. Plays a role in the regulation of insulin secretion in response to elevated glucose levels, probably via phosphorylation of CDK16 and PAK1. While BRSK2 phosphorylated at Thr-175 can inhibit insulin secretion, BRSK2 phosphorylated at Thr-261 can promote insulin secretion. Regulates reorganization of the actin cytoskeleton. May play a role in the apoptotic response triggered by endoplasmic reticulum (ER) stress. In Mus musculus (Mouse), this protein is Serine/threonine-protein kinase BRSK2 (Brsk2).